The chain runs to 150 residues: Catabolic 3-dehydroquinase 2 (150 aa).

The Proton acceptor role is filled by tyrosine 23. Substrate is bound by residues asparagine 74, histidine 80, and aspartate 87. Histidine 100 acts as the Proton donor in catalysis. Residues 101 to 102 (IT) and arginine 111 contribute to the substrate site.

Belongs to the type-II 3-dehydroquinase family. In terms of assembly, homododecamer. Adopts a ring-like structure, composed of an arrangement of two hexameric rings stacked on top of one another.

The catalysed reaction is 3-dehydroquinate = 3-dehydroshikimate + H2O. It participates in aromatic compound metabolism; 3,4-dihydroxybenzoate biosynthesis; 3,4-dihydroxybenzoate from 3-dehydroquinate: step 1/2. Is involved in the catabolism of quinate. Allows the utilization of quinate as carbon source via the beta-ketoadipate pathway. The protein is Catabolic 3-dehydroquinase 2 of Neosartorya fischeri (strain ATCC 1020 / DSM 3700 / CBS 544.65 / FGSC A1164 / JCM 1740 / NRRL 181 / WB 181) (Aspergillus fischerianus).